A 501-amino-acid polypeptide reads, in one-letter code: GDP-fucose protein O-fucosyltransferase 4 (501 aa).

Over 1 to 10 (MLLQMAGRGK) the chain is Cytoplasmic. Residues 11-31 (MVPCVCLGLLGVLCWVWVSFA) form a helical; Signal-anchor for type II membrane protein membrane-spanning segment. Residues 32-501 (SFPDEQLSLG…MAVRRARGKN (470 aa)) are Lumenal-facing. Asparagine 173 is a glycosylation site (N-linked (GlcNAc...) asparagine). Cysteine 396 and cysteine 399 are disulfide-bonded. 2 N-linked (GlcNAc...) asparagine glycosylation sites follow: asparagine 428 and asparagine 478.

The protein belongs to the glycosyltransferase 10 family.

The protein localises to the endoplasmic reticulum membrane. It catalyses the reaction L-threonyl-[protein] + GDP-beta-L-fucose = 3-O-(alpha-L-fucosyl)-L-threonyl-[protein] + GDP + H(+). The enzyme catalyses L-seryl-[protein] + GDP-beta-L-fucose = 3-O-(alpha-L-fucosyl)-L-seryl-[protein] + GDP + H(+). The protein operates within protein modification; protein glycosylation. In terms of biological role, protein O-fucosyltransferase that specifically catalyzes O-fucosylation of serine or threonine residues in EMI domains of target proteins. Attaches fucose through an O-glycosidic linkage. O-fucosylation of EMI domain-containing proteins may be required for facilitating protein folding and secretion. In Takifugu rubripes (Japanese pufferfish), this protein is GDP-fucose protein O-fucosyltransferase 4 (fut11).